Reading from the N-terminus, the 431-residue chain is Glutamate-1-semialdehyde 2,1-aminomutase 1 (431 aa).

Residue lysine 268 is modified to N6-(pyridoxal phosphate)lysine.

It belongs to the class-III pyridoxal-phosphate-dependent aminotransferase family. HemL subfamily. Homodimer. The cofactor is pyridoxal 5'-phosphate.

The protein resides in the cytoplasm. The enzyme catalyses (S)-4-amino-5-oxopentanoate = 5-aminolevulinate. It participates in porphyrin-containing compound metabolism; protoporphyrin-IX biosynthesis; 5-aminolevulinate from L-glutamyl-tRNA(Glu): step 2/2. The sequence is that of Glutamate-1-semialdehyde 2,1-aminomutase 1 from Bacillus pumilus (strain SAFR-032).